The following is a 405-amino-acid chain: Replication factor C large subunit (405 aa).

47–54 (GPPGVGKT) lines the ATP pocket.

It belongs to the activator 1 small subunits family. RfcL subfamily. Heteromultimer composed of small subunits (RfcS) and large subunits (RfcL).

Its function is as follows. Part of the RFC clamp loader complex which loads the PCNA sliding clamp onto DNA. The sequence is that of Replication factor C large subunit from Saccharolobus islandicus (strain M.16.4 / Kamchatka #3) (Sulfolobus islandicus).